The primary structure comprises 722 residues: Ataxin-7-like protein 2 (722 aa).

Disordered regions lie at residues 106-228 (LSKL…PPKT), 288-317 (NSRKGESPKEKSPGRKEQVLERPSQELPSS), 347-403 (SRAS…DCHY), and 531-600 (AITS…GCRG). Residues 181-191 (GKPPMAPPSKE) are compositionally biased toward pro residues. The 68-residue stretch at 230–297 (RKMARKECDL…NSRKGESPKE (68 aa)) folds into the SCA7 domain. Basic and acidic residues predominate over residues 290 to 311 (RKGESPKEKSPGRKEQVLERPS). A compositionally biased stretch (low complexity) spans 541 to 556 (PSPSFSKLPPSKASKS). The segment covering 558-569 (KGKDGVEVEAPS) has biased composition (basic and acidic residues). Serine 575 is modified (phosphoserine).

The protein is Ataxin-7-like protein 2 (ATXN7L2) of Homo sapiens (Human).